Here is a 141-residue protein sequence, read N- to C-terminus: Large ribosomal subunit protein uL11 (141 aa).

This sequence belongs to the universal ribosomal protein uL11 family. As to quaternary structure, part of the ribosomal stalk of the 50S ribosomal subunit. Interacts with L10 and the large rRNA to form the base of the stalk. L10 forms an elongated spine to which L12 dimers bind in a sequential fashion forming a multimeric L10(L12)X complex. Post-translationally, one or more lysine residues are methylated.

In terms of biological role, forms part of the ribosomal stalk which helps the ribosome interact with GTP-bound translation factors. The polypeptide is Large ribosomal subunit protein uL11 (Streptococcus agalactiae serotype Ia (strain ATCC 27591 / A909 / CDC SS700)).